Reading from the N-terminus, the 295-residue chain is Bifunctional protein FolD (295 aa).

Residues 177–179 (GRS) and S202 contribute to the NADP(+) site.

This sequence belongs to the tetrahydrofolate dehydrogenase/cyclohydrolase family. Homodimer.

The catalysed reaction is (6R)-5,10-methylene-5,6,7,8-tetrahydrofolate + NADP(+) = (6R)-5,10-methenyltetrahydrofolate + NADPH. It catalyses the reaction (6R)-5,10-methenyltetrahydrofolate + H2O = (6R)-10-formyltetrahydrofolate + H(+). Its pathway is one-carbon metabolism; tetrahydrofolate interconversion. In terms of biological role, catalyzes the oxidation of 5,10-methylenetetrahydrofolate to 5,10-methenyltetrahydrofolate and then the hydrolysis of 5,10-methenyltetrahydrofolate to 10-formyltetrahydrofolate. In Psychrobacter arcticus (strain DSM 17307 / VKM B-2377 / 273-4), this protein is Bifunctional protein FolD.